The chain runs to 2319 residues: A-kinase anchor protein 6 (2319 aa).

Composition is skewed to polar residues over residues 1-12 (MLTMSVTLSPLR) and 324-339 (GVSSSSGEALTNAAQP). Disordered stretches follow at residues 1–24 (MLTMSVTLSPLRSQDLDPMATDAS), 301–369 (VDDK…NATP), 493–532 (SRLKKPHKTSEEVPPCRTPKRGTGSGKQAKNTKSSAVPNG), 566–614 (LQLQ…PSHV), and 691–757 (TRLG…SATK). The span at 340 to 351 (SSETVQQESSSS) shows a compositional bias: low complexity. Composition is skewed to polar residues over residues 518–532 (GKQAKNTKSSAVPNG) and 566–591 (LQLQSETSSSPAFTQSSESSVGSDNI). Residues 697–711 (SPSSSSDIASSLGES) are compositionally biased toward low complexity. Basic and acidic residues predominate over residues 735–754 (KYADEKSERASSSEKNESHS). 2 Spectrin repeats span residues 762 to 848 (QKLM…QLLE) and 1036 to 1150 (EKVD…LLDD). The residue at position 1073 (serine 1073) is a Phosphoserine. Residues 1250-1272 (KLGETSNEDPGYDEEADNHGGSQ) are disordered. A compositionally biased stretch (acidic residues) spans 1255–1265 (SNEDPGYDEEA). Residues serine 1570 and serine 1595 each carry the phosphoserine modification. Disordered regions lie at residues 1821–1842 (VSDEMKGSKDISSSEMTNPSDT), 1900–1925 (EGIPERQKGKPNVTSKVSENLGSHGK), and 1963–1983 (KCPNHHHFENQSTASTPTEKS). Polar residues-rich tracts occupy residues 1830–1842 (DISSSEMTNPSDT), 1911–1920 (NVTSKVSENL), and 1972–1982 (NQSTASTPTEK). A PKA-RII subunit binding domain region spans residues 2063 to 2076 (IIDMASTALKSKSQ). Over residues 2198–2215 (FSDSSLSADDADTVALSS) the composition is skewed to low complexity. The tract at residues 2198–2319 (FSDSSLSADD…HEKRHRNMHR (122 aa)) is disordered.

In terms of assembly, interacts with RII subunit of PKA, phosphatase 2B (calcineurin) and AKAP79. Interacts with SYNPO2. As to expression, highly expressed in cardiac and skeletal muscle, followed by brain.

The protein resides in the sarcoplasmic reticulum. It localises to the nucleus membrane. In terms of biological role, binds to type II regulatory subunits of protein kinase A and anchors/targets them to the nuclear membrane or sarcoplasmic reticulum. May act as an adapter for assembling multiprotein complexes. This is A-kinase anchor protein 6 (AKAP6) from Homo sapiens (Human).